We begin with the raw amino-acid sequence, 390 residues long: Mannitol-1-phosphate 5-dehydrogenase (390 aa).

7 to 18 (AVHFGGGNIGRG) contributes to the NAD(+) binding site. Lysine 216 is an active-site residue.

It belongs to the mannitol dehydrogenase family. Monomer.

The catalysed reaction is D-mannitol 1-phosphate + NAD(+) = beta-D-fructose 6-phosphate + NADH + H(+). Functionally, catalyzes the NAD(H)-dependent interconversion of D-fructose 6-phosphate and D-mannitol 1-phosphate in the mannitol metabolic pathway. Has a strong preference for NADH over NADPH. In Alternaria alternata (Alternaria rot fungus), this protein is Mannitol-1-phosphate 5-dehydrogenase.